Reading from the N-terminus, the 662-residue chain is MALITLRKNLYRLSDFQMHRALAALKNKPLNHVHKVVKERLCPWLCSRQPEPFGVKFHHAHCKKFHSKNGNDLHPLGGPVFSQVSDCDRLEQNVKNEESQMFYRRLSNLTSSEEVLSFISTMETLPDTMAAGALQRICEVEKKDGDQGLPKEILENSIFQALCFQFEKEPSQLSNTSLVTALQALILLHVDPQSSLLLNLVAECQNRLRKGGMEVRNLCILGESLITLHSSGCVTLELIINQLQGEKLETFTPEDIVALYRILQACTEKVDEHQTFLNKINNFSLSIVSNLSPKLISQMLTALVVLDQSQAFPLIIKLGKYVVRHVPHFTNEELRRVLEAFIYFGHHDTFFTKALEHRVAAVCLTLDPEVVCRVMEYCSRELILSKPILNAVAETFVCQTEKFSPRQISALMEPFGKLNYLPPNASALFRKLENVLFTHFNYFPPKSLLKLLHSCSLNECHPVNFLAKIFKPLFLQRLQGKESHLDTLSRAQLTQLFLASVLECPFYKGPKLLPKYQVKSFLTPCCSLETPVDSQLYRYVKIGLTNLLGARLYFAPKVLTPYCYTIDVEIKLDEEGFVLPSTANEDIHKRIALCIDGPKRFCSNSKHLLGKEAIKQRHLQLLGYQVVQIPYHEIGMLKSRRELVEYLQRKLFSQNTVHWLQE.

The region spanning 591–649 is the RAP domain; sequence IALCIDGPKRFCSNSKHLLGKEAIKQRHLQLLGYQVVQIPYHEIGMLKSRRELVEYLQR.

Belongs to the FAST kinase family. Expression detected in spleen, thymus, testis, ovary, colon, heart, smooth muscle, kidney, brain, lung, liver and white adipose tissue with highest expression in liver and thyroid.

Its subcellular location is the mitochondrion. Its function is as follows. Required for normal mitochondrial respiration. Increases steady-state levels and half-lives of a subset of mature mitochondrial mRNAs MT-ND2, MT-ND3, MT-CYTB, MT-CO2, and MT-ATP8/6. Promotes MT-CO1 mRNA translation and increases mitochondrial complex IV assembly and activity. This is FAST kinase domain-containing protein 3, mitochondrial (FASTKD3) from Homo sapiens (Human).